We begin with the raw amino-acid sequence, 124 residues long: Ribonuclease pancreatic (124 aa).

The span at 1 to 13 (KESAAAKFERQHM) shows a compositional bias: basic and acidic residues. A disordered region spans residues 1 to 24 (KESAAAKFERQHMDSSTSSASSSN). Lysine 7 and arginine 10 together coordinate substrate. The active-site Proton acceptor is the histidine 12. 4 disulfide bridges follow: cysteine 26-cysteine 84, cysteine 40-cysteine 95, cysteine 58-cysteine 110, and cysteine 65-cysteine 72. Asparagine 34 is a glycosylation site (N-linked (GlcNAc...) asparagine; partial). Residues 41–45 (KPVNT), lysine 66, and arginine 85 contribute to the substrate site. Histidine 119 functions as the Proton donor in the catalytic mechanism.

This sequence belongs to the pancreatic ribonuclease family. Monomer. Interacts with and forms tight 1:1 complexes with RNH1. Dimerization of two such complexes may occur. Interaction with RNH1 inhibits this protein. Pancreas.

The protein localises to the secreted. The enzyme catalyses an [RNA] containing cytidine + H2O = an [RNA]-3'-cytidine-3'-phosphate + a 5'-hydroxy-ribonucleotide-3'-[RNA].. It catalyses the reaction an [RNA] containing uridine + H2O = an [RNA]-3'-uridine-3'-phosphate + a 5'-hydroxy-ribonucleotide-3'-[RNA].. In terms of biological role, endonuclease that catalyzes the cleavage of RNA on the 3' side of pyrimidine nucleotides. Acts on single-stranded and double-stranded RNA. The polypeptide is Ribonuclease pancreatic (RNASE1) (Ovis aries (Sheep)).